The following is a 957-amino-acid chain: Kinesin heavy chain isoform 5C (957 aa).

Residues 8-327 (SIKVMCRFRP…LMFGQRAKTI (320 aa)) form the Kinesin motor domain. Residues glutamine 87, serine 89, serine 90, glycine 91, lysine 92, threonine 93, histidine 94, and lysine 99 each contribute to the ATP site. The interval 174-315 (VSSPEEVMDV…PSVFNEAETK (142 aa)) is microtubule-binding. Residues 406–923 (VAGISTEEKE…ARRAHSAQIA (518 aa)) are a coiled coil. The tract at residues 859–956 (RCELPKLEKR…GSSSNSTHYQ (98 aa)) is globular. Positions 911 to 957 (KNMARRAHSAQIAKPIRPGHYPASSPTAVHAIRGGGGSSSNSTHYQK) are disordered.

It belongs to the TRAFAC class myosin-kinesin ATPase superfamily. Kinesin family. Kinesin subfamily. Oligomer composed of two heavy chains and two light chains. Interacts with GRIP1 and KLC3. Interacts with TRAK1. Interacts with ZFYVE27. In terms of tissue distribution, highest expression in brain, prostate and testis, and moderate expression in kidney, small intestine and ovary.

It localises to the cytoplasm. The protein localises to the cytoskeleton. The protein resides in the cell projection. It is found in the dendrite. The enzyme catalyses ATP + H2O = ADP + phosphate + H(+). In terms of biological role, microtubule-associated force-producing protein that may play a role in organelle transport. Has ATPase activity. Involved in synaptic transmission. Mediates dendritic trafficking of mRNAs. Required for anterograde axonal transportation of MAPK8IP3/JIP3 which is essential for MAPK8IP3/JIP3 function in axon elongation. The sequence is that of Kinesin heavy chain isoform 5C (KIF5C) from Homo sapiens (Human).